Reading from the N-terminus, the 471-residue chain is Tryptophanase (471 aa).

At lysine 256 the chain carries N6-(pyridoxal phosphate)lysine.

It belongs to the beta-eliminating lyase family. Homotetramer. The cofactor is pyridoxal 5'-phosphate.

The catalysed reaction is L-tryptophan + H2O = indole + pyruvate + NH4(+). It functions in the pathway amino-acid degradation; L-tryptophan degradation via pyruvate pathway; indole and pyruvate from L-tryptophan: step 1/1. This Salinibacter ruber (strain DSM 13855 / M31) protein is Tryptophanase.